A 242-amino-acid polypeptide reads, in one-letter code: 1-(5-phosphoribosyl)-5-[(5-phosphoribosylamino)methylideneamino] imidazole-4-carboxamide isomerase (242 aa).

Aspartate 7 serves as the catalytic Proton acceptor. Residue aspartate 129 is the Proton donor of the active site.

It belongs to the HisA/HisF family.

The protein localises to the cytoplasm. It catalyses the reaction 1-(5-phospho-beta-D-ribosyl)-5-[(5-phospho-beta-D-ribosylamino)methylideneamino]imidazole-4-carboxamide = 5-[(5-phospho-1-deoxy-D-ribulos-1-ylimino)methylamino]-1-(5-phospho-beta-D-ribosyl)imidazole-4-carboxamide. It participates in amino-acid biosynthesis; L-histidine biosynthesis; L-histidine from 5-phospho-alpha-D-ribose 1-diphosphate: step 4/9. The sequence is that of 1-(5-phosphoribosyl)-5-[(5-phosphoribosylamino)methylideneamino] imidazole-4-carboxamide isomerase from Pseudoalteromonas translucida (strain TAC 125).